The sequence spans 361 residues: Chorismate synthase (361 aa).

2 residues coordinate NADP(+): Arg-48 and Arg-54. FMN is bound by residues 125 to 127, 238 to 239, Gly-278, 293 to 297, and Arg-319; these read RSS, NA, and KPTSS.

It belongs to the chorismate synthase family. In terms of assembly, homotetramer. It depends on FMNH2 as a cofactor.

It catalyses the reaction 5-O-(1-carboxyvinyl)-3-phosphoshikimate = chorismate + phosphate. Its pathway is metabolic intermediate biosynthesis; chorismate biosynthesis; chorismate from D-erythrose 4-phosphate and phosphoenolpyruvate: step 7/7. Its function is as follows. Catalyzes the anti-1,4-elimination of the C-3 phosphate and the C-6 proR hydrogen from 5-enolpyruvylshikimate-3-phosphate (EPSP) to yield chorismate, which is the branch point compound that serves as the starting substrate for the three terminal pathways of aromatic amino acid biosynthesis. This reaction introduces a second double bond into the aromatic ring system. The protein is Chorismate synthase of Escherichia coli O139:H28 (strain E24377A / ETEC).